A 331-amino-acid chain; its full sequence is Outer membrane lipoprotein PM1514 (331 aa).

The first 20 residues, Met-1–Ala-20, serve as a signal peptide directing secretion. Cys-21 is lipidated: N-palmitoyl cysteine. Cys-21 carries the S-diacylglycerol cysteine lipid modification.

Its subcellular location is the cell outer membrane. The protein localises to the cell surface. This Pasteurella multocida (strain Pm70) protein is Outer membrane lipoprotein PM1514.